The primary structure comprises 436 residues: 3-ketoacyl-CoA thiolase (436 aa).

C99 (acyl-thioester intermediate) is an active-site residue. Active-site proton acceptor residues include H392 and C422.

Belongs to the thiolase-like superfamily. Thiolase family. Heterotetramer of two alpha chains (FadJ) and two beta chains (FadI).

It localises to the cytoplasm. It carries out the reaction an acyl-CoA + acetyl-CoA = a 3-oxoacyl-CoA + CoA. The protein operates within lipid metabolism; fatty acid beta-oxidation. Functionally, catalyzes the final step of fatty acid oxidation in which acetyl-CoA is released and the CoA ester of a fatty acid two carbons shorter is formed. The chain is 3-ketoacyl-CoA thiolase from Pseudoalteromonas translucida (strain TAC 125).